Consider the following 351-residue polypeptide: MSLQINTPDWILHANAPLRDLNTFHIQAQARWLLEIIHPTALPQALTHPHIVGLPILVLGSGSNVLLAANPEECVLRFVNREVTILEHRINHALVRAGAGMAWHDLVLWSLQQGLSGLENLALIPGTVGACSIQNIGAYGVQVEEFVHIVEAYDQTEGQFVRLTASECEFAYRNSRFKREPNRYLIAAVEFRLPLLHELKLNYAGISEELEALQITLPEPRDVAQAVINLRRRKLPDPEVLSNAGSFFKNPYLPREQAEQLRQHHPTLPIYPGETPESNKLSAAWLIEQCGWKGIREGDAGVAPQHALVLVNYGEATGAELLALARRIAASVQERFGVAIEPETRLIGAQW.

Positions 25–196 (HIQAQARWLL…AAVEFRLPLL (172 aa)) constitute an FAD-binding PCMH-type domain. Arg173 is an active-site residue. Ser246 acts as the Proton donor in catalysis. Residue Glu343 is part of the active site.

It belongs to the MurB family. Requires FAD as cofactor.

It localises to the cytoplasm. The catalysed reaction is UDP-N-acetyl-alpha-D-muramate + NADP(+) = UDP-N-acetyl-3-O-(1-carboxyvinyl)-alpha-D-glucosamine + NADPH + H(+). The protein operates within cell wall biogenesis; peptidoglycan biosynthesis. In terms of biological role, cell wall formation. The polypeptide is UDP-N-acetylenolpyruvoylglucosamine reductase (Xylella fastidiosa (strain 9a5c)).